The chain runs to 143 residues: Peptide methionine sulfoxide reductase MsrB (143 aa).

Residues 16–139 (DAELRRRLTP…NSAALNFESR (124 aa)) form the MsrB domain. Zn(2+) is bound by residues Cys-55, Cys-58, Cys-104, and Cys-107. The active-site Nucleophile is Cys-128.

The protein belongs to the MsrB Met sulfoxide reductase family. The cofactor is Zn(2+).

It catalyses the reaction L-methionyl-[protein] + [thioredoxin]-disulfide + H2O = L-methionyl-(R)-S-oxide-[protein] + [thioredoxin]-dithiol. This Burkholderia ambifaria (strain MC40-6) protein is Peptide methionine sulfoxide reductase MsrB.